We begin with the raw amino-acid sequence, 471 residues long: Plant intracellular Ras-group-related LRR protein 2 (471 aa).

Residues 106 to 133 adopt a coiled-coil conformation; sequence VVRLDEVHDSYEKKLKDTEEELSRVYST. 10 LRR repeats span residues 159–182, 183–205, 206–229, 231–251, 253–275, 276–298, 300–321, 324–346, 347–369, and 371–392; these read GGTV…FWKV, VGLV…ISKL, KKLE…GMLL, LRIL…IAHC, SLVE…GYGL, QNLE…ISEM, NLKY…IGRL, LEVL…ITDL, TNLR…FYRL, and KLEK…VATQ. The short motif at 393–405 is the GVYW; degenerate element; sequence GAEVVREFMRKRW.

This sequence belongs to the SHOC2 family. As to expression, widely expressed but preferentially in roots.

Leucine-rich repeat protein that likely mediates protein interactions, possibly in the context of signal transduction. The polypeptide is Plant intracellular Ras-group-related LRR protein 2 (PIRL2) (Arabidopsis thaliana (Mouse-ear cress)).